Here is a 439-residue protein sequence, read N- to C-terminus: Serine hydroxymethyltransferase (439 aa).

(6S)-5,6,7,8-tetrahydrofolate-binding positions include L134 and 138–140 (GHL). Position 243 is an N6-(pyridoxal phosphate)lysine (K243).

The protein belongs to the SHMT family. Homodimer. The cofactor is pyridoxal 5'-phosphate.

It localises to the cytoplasm. It catalyses the reaction (6R)-5,10-methylene-5,6,7,8-tetrahydrofolate + glycine + H2O = (6S)-5,6,7,8-tetrahydrofolate + L-serine. Its pathway is one-carbon metabolism; tetrahydrofolate interconversion. The protein operates within amino-acid biosynthesis; glycine biosynthesis; glycine from L-serine: step 1/1. Its function is as follows. Catalyzes the reversible interconversion of serine and glycine with tetrahydrofolate (THF) serving as the one-carbon carrier. This reaction serves as the major source of one-carbon groups required for the biosynthesis of purines, thymidylate, methionine, and other important biomolecules. Also exhibits THF-independent aldolase activity toward beta-hydroxyamino acids, producing glycine and aldehydes, via a retro-aldol mechanism. The polypeptide is Serine hydroxymethyltransferase (Brucella anthropi (strain ATCC 49188 / DSM 6882 / CCUG 24695 / JCM 21032 / LMG 3331 / NBRC 15819 / NCTC 12168 / Alc 37) (Ochrobactrum anthropi)).